Here is a 412-residue protein sequence, read N- to C-terminus: Multifunctional CCA protein (412 aa).

2 residues coordinate ATP: glycine 8 and arginine 11. The CTP site is built by glycine 8 and arginine 11. Positions 21 and 23 each coordinate Mg(2+). ATP-binding residues include arginine 91, arginine 137, and arginine 140. The CTP site is built by arginine 91, arginine 137, and arginine 140. Residues 228–329 (TGIHTMMVLA…LKVFDKADAW (102 aa)) form the HD domain.

It belongs to the tRNA nucleotidyltransferase/poly(A) polymerase family. Bacterial CCA-adding enzyme type 1 subfamily. As to quaternary structure, monomer. Can also form homodimers and oligomers. Requires Mg(2+) as cofactor. Ni(2+) is required as a cofactor.

It carries out the reaction a tRNA precursor + 2 CTP + ATP = a tRNA with a 3' CCA end + 3 diphosphate. It catalyses the reaction a tRNA with a 3' CCA end + 2 CTP + ATP = a tRNA with a 3' CCACCA end + 3 diphosphate. Functionally, catalyzes the addition and repair of the essential 3'-terminal CCA sequence in tRNAs without using a nucleic acid template. Adds these three nucleotides in the order of C, C, and A to the tRNA nucleotide-73, using CTP and ATP as substrates and producing inorganic pyrophosphate. tRNA 3'-terminal CCA addition is required both for tRNA processing and repair. Also involved in tRNA surveillance by mediating tandem CCA addition to generate a CCACCA at the 3' terminus of unstable tRNAs. While stable tRNAs receive only 3'-terminal CCA, unstable tRNAs are marked with CCACCA and rapidly degraded. In Aeromonas hydrophila subsp. hydrophila (strain ATCC 7966 / DSM 30187 / BCRC 13018 / CCUG 14551 / JCM 1027 / KCTC 2358 / NCIMB 9240 / NCTC 8049), this protein is Multifunctional CCA protein.